The chain runs to 316 residues: Putative HTH-type transcriptional regulatory protein PYRAB03670 (316 aa).

One can recognise an HTH cro/C1-type domain in the interval 131-189 (LKDLREKHGYSLSELANILGVSRKSLQRYEKGDSMVTLEVALRLEEVFDEALVKPINVL). Positions 142-161 (LSELANILGVSRKSLQRYEK) form a DNA-binding region, H-T-H motif.

In Pyrococcus abyssi (strain GE5 / Orsay), this protein is Putative HTH-type transcriptional regulatory protein PYRAB03670.